An 836-amino-acid chain; its full sequence is MVTVGNYCEAEGPAGPAWTQNGLSPCFFYTLVPSTLMTLGVLALVLVLPCRRREVPAGTEELSWAAGPRVAPYALQLSLAILQMALPLASLAGRVGTARGVRLPGYLLLASVLESLASACGLWLLVVERSQARQSLAMGVWMKFRHSLGLLLLWTVTFAAENLVLVSWNSPQWWWSRADLGQQVQFGLWVLRYMTSGGLFILGLWAPGLRPQSYTLHVNEEDQDGGRNQGRSTDPRSTWRDLGRKLRLLSGYLWPRGSPSLQLTVLLCMGLMGLDRALNVLVPIFYRDIVNLLTSKAPWSSLAWTVTTYVFLKFLQGGGTGSTGFVSNLRTFLWIRVQQFTSRGVELRLFSHLHELSLRWHLGRRTGEVLRIVDRGTSSVTGLLSYLVFNIIPTLADIIIGIIYFSMFFNAWFGLIVFLCMSLYLILTIMVTEWRAKFRRDMNTQENATRARAVDSLLNFETVKYYNAEGYELERYREAILKFQGLEWKSTASLVLLNQTQNMVIGFGLLAGSLLCAYFVSERRLQVGDFVLFGTYITQLYMPLNWFGTYYRMIQTNFIDMENMFDLLKEETEVKDVPGAGPLRFHKGRVEFENVHFSYADGRETLQDVSFTVMPGQTVALVGPSGAGKSTILRLLFRFYDISSGCIRIDGQDISQVTQISLRSHIGVVPQDTVLFNDTIANNIRYGRVTAGDSEIQAAAQAAGIHDAILSFPEGYETQVGERGLKLSGGEKQRVAIARTILKAPDIILLDEATSALDTSNERAIQASLAKVCTNRTTIVVAHRLSTVVNADQILVIKDGCIIERGRHEALLSRGGVYAEMWQLQQQGQETVPEDS.

Residues 1 to 26 (MVTVGNYCEAEGPAGPAWTQNGLSPC) lie on the Lumenal side of the membrane. Residues 1–205 (MVTVGNYCEA…SGGLFILGLW (205 aa)) form a required for the lysosomal targeting region. A required for ATPase activity region spans residues 1–236 (MVTVGNYCEA…RNQGRSTDPR (236 aa)). An intrachain disulfide couples Cys8 to Cys26. A helical membrane pass occupies residues 27–47 (FFYTLVPSTLMTLGVLALVLV). Topologically, residues 48 to 72 (LPCRRREVPAGTEELSWAAGPRVAP) are cytoplasmic. Residues 73–93 (YALQLSLAILQMALPLASLAG) traverse the membrane as a helical segment. Topologically, residues 94–106 (RVGTARGVRLPGY) are lumenal. A helical membrane pass occupies residues 107–127 (LLLASVLESLASACGLWLLVV). Residues 128–147 (ERSQARQSLAMGVWMKFRHS) are Cytoplasmic-facing. Residues 148–168 (LGLLLLWTVTFAAENLVLVSW) form a helical membrane-spanning segment. The Lumenal segment spans residues 169-185 (NSPQWWWSRADLGQQVQ). A helical transmembrane segment spans residues 186–206 (FGLWVLRYMTSGGLFILGLWA). The Cytoplasmic portion of the chain corresponds to 207-264 (PGLRPQSYTLHVNEEDQDGGRNQGRSTDPRSTWRDLGRKLRLLSGYLWPRGSPSLQLT). Residues 265-285 (VLLCMGLMGLDRALNVLVPIF) form a helical membrane-spanning segment. The region spanning 265-556 (VLLCMGLMGL…FGTYYRMIQT (292 aa)) is the ABC transmembrane type-1 domain. Residues 286–305 (YRDIVNLLTSKAPWSSLAWT) are Lumenal-facing. The chain crosses the membrane as a helical span at residues 306-326 (VTTYVFLKFLQGGGTGSTGFV). Topologically, residues 327–375 (SNLRTFLWIRVQQFTSRGVELRLFSHLHELSLRWHLGRRTGEVLRIVDR) are cytoplasmic. A helical membrane pass occupies residues 376-396 (GTSSVTGLLSYLVFNIIPTLA). A topological domain (lumenal) is located at residue Asp397. The helical transmembrane segment at 398–418 (IIIGIIYFSMFFNAWFGLIVF) threads the bilayer. Residues 419-499 (LCMSLYLILT…STASLVLLNQ (81 aa)) are Cytoplasmic-facing. Residues 500–520 (TQNMVIGFGLLAGSLLCAYFV) traverse the membrane as a helical segment. Residues 521–529 (SERRLQVGD) lie on the Lumenal side of the membrane. A helical transmembrane segment spans residues 530–550 (FVLFGTYITQLYMPLNWFGTY). Residues 551–836 (YRMIQTNFID…QGQETVPEDS (286 aa)) are Cytoplasmic-facing. Residues 590 to 824 (VEFENVHFSY…GGVYAEMWQL (235 aa)) enclose the ABC transporter domain. ATP contacts are provided by residues Tyr599 and 623–634 (GPSGAGKSTILR).

This sequence belongs to the ABC transporter superfamily. ABCB family. Heavy Metal importer (TC 3.A.1.210) subfamily. In terms of assembly, homodimer. Post-translationally, N-glycosylated. As to expression, ubiquitously expressed. Highly expressed in testis by meiotic pachytene spermatocytes and post-meiotic early spermatids.

It localises to the cell membrane. Its subcellular location is the mitochondrion outer membrane. The protein resides in the endoplasmic reticulum membrane. It is found in the golgi apparatus membrane. The protein localises to the endosome membrane. It localises to the lysosome membrane. Its subcellular location is the late endosome membrane. The protein resides in the early endosome membrane. It is found in the secreted. The protein localises to the extracellular exosome. It localises to the mitochondrion. Its subcellular location is the endosome. The protein resides in the multivesicular body membrane. It is found in the melanosome membrane. The catalysed reaction is heme b(in) + ATP + H2O = heme b(out) + ADP + phosphate + H(+). It carries out the reaction coproporphyrin III(in) + ATP + H2O = coproporphyrin III(out) + ADP + phosphate + H(+). It catalyses the reaction pheophorbide a(in) + ATP + H2O = pheophorbide a(out) + ADP + phosphate + H(+). The enzyme catalyses coproporphyrinogen III(in) + ATP + H2O = coproporphyrinogen III(out) + ADP + phosphate + H(+). The catalysed reaction is protoporphyrin IX(in) + ATP + H2O = protoporphyrin IX(out) + ADP + phosphate + H(+). It carries out the reaction coproporphyrin I(in) + ATP + H2O = coproporphyrin I(out) + ADP + phosphate + H(+). It catalyses the reaction uroporphyrin I(in) + ATP + H2O = uroporphyrin I(out) + ADP + phosphate + H(+). The enzyme catalyses uroporphyrin III(in) + ATP + H2O = uroporphyrin III(out) + ADP + phosphate + H(+). ATP-dependent transporter that catalyzes the transport of a broad-spectrum of porphyrins from the cytoplasm to the extracellular space through the plasma membrane or into the vesicle lumen. May also function as an ATP-dependent importer of porphyrins from the cytoplasm into the mitochondria, in turn may participate in the de novo heme biosynthesis regulation and in the coordination of heme and iron homeostasis during phenylhydrazine stress. May play a key role in the early steps of melanogenesis producing PMEL amyloid fibrils. In vitro, it confers to cells a resistance to toxic metal such as arsenic and cadmium and against chemotherapeutics agent such as 5-fluorouracil, SN-38 and vincristin. In addition may play a role in the transition metal homeostasis. This is ATP-binding cassette sub-family B member 6 from Rattus norvegicus (Rat).